The primary structure comprises 297 residues: Lymphocyte antigen 6 complex locus protein G6f (297 aa).

The N-terminal stretch at 1-16 (MAVLFLLLFLCGTPQA) is a signal peptide. In terms of domain architecture, Ig-like V-type spans 17 to 122 (ADNMQAIYVA…HNYQNWRVYD (106 aa)). Residues 17–235 (ADNMQAIYVA…APSTGWDMPW (219 aa)) are Extracellular-facing. The cysteines at positions 35 and 106 are disulfide-linked. Residue Asn88 is glycosylated (N-linked (GlcNAc...) asparagine). A helical transmembrane segment spans residues 236-256 (ILMLLLTMGQGVVILALSIVL). Topologically, residues 257-297 (WRQRVRGAPGRDASIPQFKPEIQVYENIHLARLGPPAHKPR) are cytoplasmic. The residue at position 281 (Tyr281) is a Phosphotyrosine.

In terms of assembly, homodimer; disulfide-linked. Interacts with GRB2 and GRB7 in a phosphorylation-dependent manner. Post-translationally, N-glycosylated.

It localises to the cell membrane. Functionally, may play a role in the downstream signal transduction pathways involving GRB2 and GRB7. The sequence is that of Lymphocyte antigen 6 complex locus protein G6f (LY6G6F) from Homo sapiens (Human).